The primary structure comprises 343 residues: Endoplasmic reticulum-resident calcium binding protein (343 aa).

The first 26 residues, 1–26, serve as a signal peptide directing secretion; the sequence is MMKINLYKLLCFICVIFLLHKNVVRS. EF-hand domains are found at residues 59-94, 95-130, 135-170, 172-207, and 210-245; these read GAKE…LKNE, IFLK…NLDA, KHSE…MKDE, LKEL…ESSG, and KDDE…PAHE. The Ca(2+) site is built by aspartate 72, asparagine 74, aspartate 76, glutamate 78, glutamate 83, aspartate 108, aspartate 110, aspartate 112, glutamate 119, aspartate 148, aspartate 150, aspartate 152, lysine 154, glutamate 159, aspartate 185, asparagine 187, aspartate 189, lysine 191, glutamate 196, aspartate 223, asparagine 225, aspartate 227, and glutamate 234. Residues 313 to 331 are compositionally biased toward acidic residues; the sequence is EDDDMDADNTEDDKDEADD. Residues 313–343 are disordered; sequence EDDDMDADNTEDDKDEADDASQQKSPAIDEL.

It belongs to the CREC family.

The protein localises to the endoplasmic reticulum. Functionally, calcium-binding protein. Required for schizont to ring transition. Required for the breakdown of the parasitophorous vacuole membrane during egress. Required for the proteolytic maturation of apical membrane antigen 1 (AMA-1) during egress. Required for the proteolytic maturation of subtilisin-like protease 1 (SUB1) during egress. Required for the proteolytic maturation of plasmepsin X (PMX) during egress. This Plasmodium falciparum (isolate 3D7) protein is Endoplasmic reticulum-resident calcium binding protein.